Consider the following 535-residue polypeptide: uncharacterized protein (535 aa).

A run of 2 helical transmembrane segments spans residues 7 to 27 (DFDV…AYLA) and 509 to 529 (GGAV…ACLA).

The protein resides in the cell membrane. This is an uncharacterized protein from Mycobacterium bovis (strain ATCC BAA-935 / AF2122/97).